The primary structure comprises 444 residues: Glutamate--tRNA ligase 1 (444 aa).

The 'HIGH' region signature appears at 7-17; that stretch reads PSPTGYLHVGN. The 'KMSKS' region motif lies at 238 to 242; that stretch reads KISKR. Position 241 (K241) interacts with ATP.

This sequence belongs to the class-I aminoacyl-tRNA synthetase family. Glutamate--tRNA ligase type 1 subfamily. Monomer.

The protein localises to the cytoplasm. It catalyses the reaction tRNA(Glu) + L-glutamate + ATP = L-glutamyl-tRNA(Glu) + AMP + diphosphate. Its function is as follows. Catalyzes the attachment of glutamate to tRNA(Glu) in a two-step reaction: glutamate is first activated by ATP to form Glu-AMP and then transferred to the acceptor end of tRNA(Glu). This chain is Glutamate--tRNA ligase 1, found in Wolbachia pipientis subsp. Culex pipiens (strain wPip).